Here is a 116-residue protein sequence, read N- to C-terminus: Large ribosomal subunit protein uL18 (116 aa).

This sequence belongs to the universal ribosomal protein uL18 family. As to quaternary structure, part of the 50S ribosomal subunit; part of the 5S rRNA/L5/L18/L25 subcomplex. Contacts the 5S and 23S rRNAs.

Its function is as follows. This is one of the proteins that bind and probably mediate the attachment of the 5S RNA into the large ribosomal subunit, where it forms part of the central protuberance. The sequence is that of Large ribosomal subunit protein uL18 from Shewanella loihica (strain ATCC BAA-1088 / PV-4).